We begin with the raw amino-acid sequence, 212 residues long: MKSNKKILFIGAPGSGKGTISKILVEKYKLVHISTGDLFRKKISEDSQFAAQIQNYLSSGSYVPDEITNKLVADFIKKIPKNQGYILDGYPRTLQQLEFMIKNGINLDCVFYLKIKNETIISRLSQRLFCQKCQKSYNLLLAKPKNELKCDLDSTDLITRNDDRPEIITHRIEKFNNSVIPIVEFFKKSGIIYYLDAEQTLEETVIEIEKWL.

An ATP-binding site is contributed by 14 to 19; the sequence is GSGKGT. Residues 34–63 are NMP; the sequence is STGDLFRKKISEDSQFAAQIQNYLSSGSYV. Residues Thr-35, Arg-40, 61–63, 89–92, and Gln-96 contribute to the AMP site; these read SYV and GYPR. The interval 126 to 163 is LID; sequence QRLFCQKCQKSYNLLLAKPKNELKCDLDSTDLITRNDD. Arg-127 contributes to the ATP binding site. Zn(2+) contacts are provided by Cys-130 and Cys-133. An ATP-binding site is contributed by 136–137; the sequence is SY. Residues Cys-150 and Asp-153 each coordinate Zn(2+). Arg-160 and Arg-171 together coordinate AMP. Gln-199 contributes to the ATP binding site.

The protein belongs to the adenylate kinase family. As to quaternary structure, monomer.

It localises to the cytoplasm. It carries out the reaction AMP + ATP = 2 ADP. It functions in the pathway purine metabolism; AMP biosynthesis via salvage pathway; AMP from ADP: step 1/1. Functionally, catalyzes the reversible transfer of the terminal phosphate group between ATP and AMP. Plays an important role in cellular energy homeostasis and in adenine nucleotide metabolism. This is Adenylate kinase from Mesomycoplasma hyopneumoniae (strain J / ATCC 25934 / NCTC 10110) (Mycoplasma hyopneumoniae).